Consider the following 454-residue polypeptide: F-box/WD repeat-containing protein 2 (454 aa).

The region spanning 54–101 (RDFLKLLPLELSFYLLKWLDPQTLLTCCLVSKQWNKVISACTEVWQTA) is the F-box domain. WD repeat units follow at residues 139 to 175 (FETS…LWDV), 179 to 213 (QCVY…CWEW), 217 to 255 (ARTQ…VWAL), 259 to 306 (TCLN…IWPI), 313 to 352 (KCLK…QWDF), 364 to 403 (PEIA…RWPL), and 410 to 452 (KRGS…LWKE). An N6-acetyllysine modification is found at Lys298.

Directly interacts with SKP1 and CUL1.

Substrate-recognition component of the SCF (SKP1-CUL1-F-box protein)-type E3 ubiquitin ligase complex. The sequence is that of F-box/WD repeat-containing protein 2 (FBXW2) from Homo sapiens (Human).